The chain runs to 286 residues: E3 SUMO-protein ligase K-bZIP (286 aa).

2 disordered regions span residues 1 to 22 (MPRM…EKDE) and 106 to 130 (WTLS…SKRR).

In terms of assembly, interacts with host HDAC1 and HDAC2, these interactions suppress HDAC activities. Interacts with protein ORF57. Interacts with protein vPK. Sumoylated.

Its pathway is protein modification; protein sumoylation. SUMO E3 ligase that plays a role in viral gene regulation and is essential for viral reactivation. Disrupts host G1 cell cycle control thus allowing viral transcription and translation to proceed at the early stages of infection. Catalyzes its own SUMO modification as well as that of its interacting partners such as host TP53 and RB1. Regulates viral gene expression and reactivation and may mediate the SUMOylation of viral promoters in the low methylated 'Lys-9' histone H3 (H3K9me) region which results in a diminution of viral gene expression after reactivation. SUMOylates also host histone lysine demethylase 4A/KDM4A, an essential step for complete enrichment of SUMO-2/3 on the viral genome during viral transactivation and reactivation. The protein is E3 SUMO-protein ligase K-bZIP (K8) of Human herpesvirus 8 type P (isolate GK18) (HHV-8).